Here is a 510-residue protein sequence, read N- to C-terminus: MIWHIQNENFILDSTRIFMKAFHLLLFDGSFIFPECILIFGLILLLMIDSTSDQKDIPWLYFISSTSLVMSITALLFRWREEPMISFSGNFQTNNFNEIFQFLILLCSTLCIPLSVEYIECTEMAITEFLLFVLTATLGGMFLCGANDLITIFVAPECFSLCSYLLSGYTKKDVRSNEATTKYLLMGGASSSILVHGFSWLYGSSGGEIELQEIVNGLINTQMYNSPGISIALIFITVGIGFKLSPAPSHQWTPDVYEGSPTPVVAFLSVTSKVAASASATRIFDIPFYFSSNEWHLLLEILAILSMILGNLIAITQTSMKRMLAYSSIGQIGYVIIGIIVGDSNGGYASMITYMLFYISMNLGTFACIVSFGLRTGTDNIRDYAGLYTKDPFLALSLALCLLSLGGLPPLAGFFGKLHLFWCGWQAGLYFLVSIGLLTSVVSIYYYLKIIKLLMTGRNQEITPHVRNYIRSPLRSNNSIELSMIVCVIASTIPGISMNPIIAIAQDTLF.

Transmembrane regions (helical) follow at residues 24-44, 57-77, 99-119, 124-144, 149-169, 183-203, 227-247, 295-315, 323-343, 354-374, 395-415, 418-438, and 484-504; these read LLLFDGSFIFPECILIFGLIL, IPWLYFISSTSLVMSITALLF, IFQFLILLCSTLCIPLSVEYI, MAITEFLLFVLTATLGGMFLC, LITIFVAPECFSLCSYLLSGY, YLLMGGASSSILVHGFSWLYG, PGISIALIFITVGIGFKLSPA, WHLLLEILAILSMILGNLIAI, MLAYSSIGQIGYVIIGIIVGD, YMLFYISMNLGTFACIVSFGL, ALSLALCLLSLGGLPPLAGFF, LHLFWCGWQAGLYFLVSIGLL, and MIVCVIASTIPGISMNPIIAI.

It belongs to the complex I subunit 2 family. In terms of assembly, NDH is composed of at least 16 different subunits, 5 of which are encoded in the nucleus.

Its subcellular location is the plastid. It is found in the chloroplast thylakoid membrane. The catalysed reaction is a plastoquinone + NADH + (n+1) H(+)(in) = a plastoquinol + NAD(+) + n H(+)(out). The enzyme catalyses a plastoquinone + NADPH + (n+1) H(+)(in) = a plastoquinol + NADP(+) + n H(+)(out). Its function is as follows. NDH shuttles electrons from NAD(P)H:plastoquinone, via FMN and iron-sulfur (Fe-S) centers, to quinones in the photosynthetic chain and possibly in a chloroplast respiratory chain. The immediate electron acceptor for the enzyme in this species is believed to be plastoquinone. Couples the redox reaction to proton translocation, and thus conserves the redox energy in a proton gradient. The chain is NAD(P)H-quinone oxidoreductase subunit 2 A, chloroplastic from Vitis vinifera (Grape).